A 426-amino-acid chain; its full sequence is D-tagatose-1,6-bisphosphate aldolase subunit KbaZ (426 aa).

Belongs to the GatZ/KbaZ family. KbaZ subfamily. In terms of assembly, forms a complex with KbaY.

It functions in the pathway carbohydrate metabolism; D-tagatose 6-phosphate degradation; D-glyceraldehyde 3-phosphate and glycerone phosphate from D-tagatose 6-phosphate: step 2/2. Component of the tagatose-1,6-bisphosphate aldolase KbaYZ that is required for full activity and stability of the Y subunit. Could have a chaperone-like function for the proper and stable folding of KbaY. When expressed alone, KbaZ does not show any aldolase activity. This chain is D-tagatose-1,6-bisphosphate aldolase subunit KbaZ, found in Escherichia coli (strain SMS-3-5 / SECEC).